The following is a 588-amino-acid chain: Sentrin-specific protease 2 (588 aa).

Positions 28-31 (KRRR) match the Nuclear localization signal motif. Position 32 is a phosphoserine (Ser32). The short motif at 47–52 (PAKRPR) is the Nuclear localization signal element. The interval 157–184 (EGYNRRPSGRRHSKSNPESSLTWKPQEQ) is disordered. The span at 172 to 184 (NPESSLTWKPQEQ) shows a compositional bias: polar residues. The Nuclear export signal motif lies at 316-331 (MEPDLSEEVSARLRLG). A phosphoserine mark is found at Ser332 and Ser343. The tract at residues 394-558 (LRITRGDIQT…MFTCKYADYI (165 aa)) is protease. Active-site residues include His477 and Asp494. The active-site Nucleophile is Cys547.

This sequence belongs to the peptidase C48 family. As to quaternary structure, binds to SUMO2 and SUMO3. Interacts with the C-terminal domain of NUP153 via its N-terminus. Interacts with MTA1. In terms of processing, polyubiquitinated; which leads to proteasomal degradation. Highly expressed in testis. Detected in brain, heart and thymus.

The protein localises to the nucleus. Its subcellular location is the nuclear pore complex. It localises to the nucleus membrane. The protein resides in the cytoplasm. It is found in the cytoplasmic vesicle. The protein localises to the PML body. In terms of biological role, protease that catalyzes two essential functions in the SUMO pathway. The first is the hydrolysis of an alpha-linked peptide bond at the C-terminal end of the small ubiquitin-like modifier (SUMO) propeptides, SUMO1, SUMO2 and SUMO3 leading to the mature form of the proteins. The second is the deconjugation of SUMO1, SUMO2 and SUMO3 from targeted proteins, by cleaving an epsilon-linked peptide bond between the C-terminal glycine of the mature SUMO and the lysine epsilon-amino group of the target protein. May down-regulate CTNNB1 levels and thereby modulate the Wnt pathway. Deconjugates SUMO2 from MTA1. Plays a dynamic role in adipogenesis by desumoylating and promoting the stabilization of CEBPB. Acts as a regulator of the cGAS-STING pathway by catalyzing desumoylation of CGAS and STING1 during the late phase of viral infection. Activates transcription. The sequence is that of Sentrin-specific protease 2 (Senp2) from Mus musculus (Mouse).